The chain runs to 385 residues: Centrosomal protein of 44 kDa (385 aa).

The binds with microtubules and centrioles stretch occupies residues 11–191 (RKLEQRLRTL…TKCYKSALLE (181 aa)). The segment covering 194 to 204 (EEEEPTSDCEE) has biased composition (acidic residues). A disordered region spans residues 194 to 224 (EEEEPTSDCEEDSHLQREMGSPFETAEETPN). 2 coiled-coil regions span residues 224-263 (NSEQVELLRKQLAECQEKLQRLDCVEERLQSLETSVKGKI) and 353-379 (TEESKETTKQRMERITKMMEETSELLK).

As to quaternary structure, binds to centriolar microtubules.

It localises to the cytoplasm. Its subcellular location is the cytoskeleton. It is found in the microtubule organizing center. The protein resides in the centrosome. The protein localises to the centriole. It localises to the spindle pole. Its subcellular location is the midbody. Its function is as follows. Centriole-enriched microtubule-binding protein involved in centriole biogenesis. In collaboration with CEP295 and POC1B, is required for the centriole-to-centrosome conversion by ensuring the formation of bona fide centriole wall. Functions as a linker component that maintains centrosome cohesion. Associates with CROCC and regulates its stability and localization to the centrosome. The chain is Centrosomal protein of 44 kDa (cep44) from Xenopus tropicalis (Western clawed frog).